A 757-amino-acid chain; its full sequence is Xaa-Pro dipeptidyl-peptidase (757 aa).

Active-site charge relay system residues include serine 348, aspartate 468, and histidine 498.

The protein belongs to the peptidase S15 family. Homodimer.

It is found in the cytoplasm. It carries out the reaction Hydrolyzes Xaa-Pro-|- bonds to release unblocked, N-terminal dipeptides from substrates including Ala-Pro-|-p-nitroanilide and (sequentially) Tyr-Pro-|-Phe-Pro-|-Gly-Pro-|-Ile.. Its function is as follows. Removes N-terminal dipeptides sequentially from polypeptides having unsubstituted N-termini provided that the penultimate residue is proline. This Streptococcus pneumoniae (strain ATCC BAA-255 / R6) protein is Xaa-Pro dipeptidyl-peptidase.